A 313-amino-acid chain; its full sequence is MGKKKVAIIGSGNIGTDLMIKVMRLSEVLEMGVMVGIDPASDGLARAARMGVATTHKGIDGLLAMPEFADVEIVFDATSAGAHKRNSELVLAAGKRMIDLTPAAIGPYVIPPVNGDKCLDALNVNMVTCGGQATIPIVAAVNRVAKVHYGEIIASIASKSAGPGTRANIDEFTETTSQAIMDVGGATRGKAIIILNPAEPPLIMRDTVYCLCEDADQEAIRQSIHDMVAEVQSYVPGYRLKQAVQFEHIGSNRPLQIPEMDGEYTGLKVSVFLEVEGAAHYLPSYAGNLDIMTSAAMKTAEKIAARMHEGATT.

Position 11–14 (11–14 (SGNI)) interacts with NAD(+). The active-site Acyl-thioester intermediate is Cys129. NAD(+)-binding positions include 160–168 (SAGPGTRAN) and Asn288.

This sequence belongs to the acetaldehyde dehydrogenase family.

The catalysed reaction is acetaldehyde + NAD(+) + CoA = acetyl-CoA + NADH + H(+). The sequence is that of Acetaldehyde dehydrogenase 3 from Rhizorhabdus wittichii (strain DSM 6014 / CCUG 31198 / JCM 15750 / NBRC 105917 / EY 4224 / RW1) (Sphingomonas wittichii).